The sequence spans 515 residues: RNA-splicing ligase RtcB homolog (515 aa).

Residues Asp121, Cys124, His229, His269, and His363 each contribute to the Mn(2+) site. Residue 228–232 (NHYGE) coordinates GMP. Residues 363–364 (HN), 412–415 (GGTM), Ser419, 438–441 (HGSG), and Lys514 each bind GMP. His438 (GMP-histidine intermediate) is an active-site residue.

This sequence belongs to the RtcB family. In terms of assembly, catalytic component of the tRNA-splicing ligase complex. Requires Mn(2+) as cofactor.

The enzyme catalyses a 3'-end 3'-phospho-ribonucleotide-RNA + a 5'-end dephospho-ribonucleoside-RNA + GTP = a ribonucleotidyl-ribonucleotide-RNA + GMP + diphosphate. It catalyses the reaction a 3'-end 2',3'-cyclophospho-ribonucleotide-RNA + a 5'-end dephospho-ribonucleoside-RNA + GTP + H2O = a ribonucleotidyl-ribonucleotide-RNA + GMP + diphosphate + H(+). In terms of biological role, catalytic subunit of the tRNA-splicing ligase complex that acts by directly joining spliced tRNA halves to mature-sized tRNAs by incorporating the precursor-derived splice junction phosphate into the mature tRNA as a canonical 3',5'-phosphodiester. May act as an RNA ligase with broad substrate specificity, and may function toward other RNAs. The protein is RNA-splicing ligase RtcB homolog of Theileria annulata.